Reading from the N-terminus, the 359-residue chain is Nicotinate-nucleotide--dimethylbenzimidazole phosphoribosyltransferase (359 aa).

Glu318 acts as the Proton acceptor in catalysis.

It belongs to the CobT family. Homodimer.

It catalyses the reaction 5,6-dimethylbenzimidazole + nicotinate beta-D-ribonucleotide = alpha-ribazole 5'-phosphate + nicotinate + H(+). Its pathway is nucleoside biosynthesis; alpha-ribazole biosynthesis; alpha-ribazole from 5,6-dimethylbenzimidazole: step 1/2. In terms of biological role, catalyzes the synthesis of alpha-ribazole-5'-phosphate from nicotinate mononucleotide (NAMN) and 5,6-dimethylbenzimidazole (DMB). In Escherichia coli O127:H6 (strain E2348/69 / EPEC), this protein is Nicotinate-nucleotide--dimethylbenzimidazole phosphoribosyltransferase.